A 130-amino-acid chain; its full sequence is Small ribosomal subunit protein uS11 (130 aa).

It belongs to the universal ribosomal protein uS11 family. Part of the 30S ribosomal subunit. Interacts with proteins S7 and S18. Binds to IF-3.

Located on the platform of the 30S subunit, it bridges several disparate RNA helices of the 16S rRNA. Forms part of the Shine-Dalgarno cleft in the 70S ribosome. This is Small ribosomal subunit protein uS11 from Shewanella baltica (strain OS223).